Here is a 264-residue protein sequence, read N- to C-terminus: Thymidylate synthase (264 aa).

Arg-21 provides a ligand contact to dUMP. His-51 is a (6R)-5,10-methylene-5,6,7,8-tetrahydrofolate binding site. 126–127 (RR) provides a ligand contact to dUMP. Cys-146 serves as the catalytic Nucleophile. Residues 166 to 169 (RSCD), Asn-177, and 207 to 209 (HLY) contribute to the dUMP site. Asp-169 is a binding site for (6R)-5,10-methylene-5,6,7,8-tetrahydrofolate. A (6R)-5,10-methylene-5,6,7,8-tetrahydrofolate-binding site is contributed by Ala-263.

Belongs to the thymidylate synthase family. Bacterial-type ThyA subfamily. In terms of assembly, homodimer.

It is found in the cytoplasm. It carries out the reaction dUMP + (6R)-5,10-methylene-5,6,7,8-tetrahydrofolate = 7,8-dihydrofolate + dTMP. The protein operates within pyrimidine metabolism; dTTP biosynthesis. Its function is as follows. Catalyzes the reductive methylation of 2'-deoxyuridine-5'-monophosphate (dUMP) to 2'-deoxythymidine-5'-monophosphate (dTMP) while utilizing 5,10-methylenetetrahydrofolate (mTHF) as the methyl donor and reductant in the reaction, yielding dihydrofolate (DHF) as a by-product. This enzymatic reaction provides an intracellular de novo source of dTMP, an essential precursor for DNA biosynthesis. In Shigella flexneri serotype 5b (strain 8401), this protein is Thymidylate synthase.